Reading from the N-terminus, the 798-residue chain is Gelsolin (798 aa).

Residues 1–28 (MDASGAATMAVLSSLLVFLALSSSLCSA) form the signal peptide. An actin-severing region spans residues 57–181 (RVMHPSFANA…YEQGGVGTGF (125 aa)). One copy of the Gelsolin-like 1 repeat lies at 78 to 131 (ENFEPVIYPKTNYGKFYTGDSFIVLNTIENKKDKKLSWDVHFWLGLETSTDEAG). Tyr90 carries the post-translational modification Phosphotyrosine; by SRC. The segment at 128-131 (DEAG) is actin-actin interfilament contact point. A 1,2-diacyl-sn-glycero-3-phospho-(1D-myo-inositol-4,5-bisphosphate) is bound by residues 167-174 (KNGIRYEQ) and 193-201 (RLFQVKGKR). Gelsolin-like repeat units lie at residues 203-243 (VRVR…VEKL), 322-365 (LKVD…KEKT), 474-524 (IVVS…AARK), and 583-625 (VHAS…FEKQ). Positions 451–792 (MPDHGQNVIE…SYEDMKQLVI (342 aa)) are actin-binding, Ca-sensitive. Asp599 lines the Ca(2+) pocket. Phosphotyrosine; by SRC is present on Tyr612. Residue Glu623 coordinates Ca(2+). Tyr662 carries the post-translational modification Phosphotyrosine; by SRC. Residues 689 to 730 (LKVEEVAQYEQEDLDSDDIMLLDAGDEIYLWVGYGVSEEENG) form a Gelsolin-like 6 repeat. Ca(2+) is bound by residues Asp705, Asp706, and Glu728.

It belongs to the villin/gelsolin family. In terms of assembly, binds to actin and to fibronectin. In terms of tissue distribution, isoform 1 and isoform 2 are ubiquitously expressed in early embryo. Isoform 1 is expressed in the fat body, and is abundant in hemolymph. Isoform 2 is expressed in parts of the gut.

The protein resides in the cytoplasm. The protein localises to the cytoskeleton. It is found in the secreted. Calcium-regulated, actin-modulating protein that binds to the plus (or barbed) ends of actin monomers or filaments, preventing monomer exchange (end-blocking or capping). It can promote the assembly of monomers into filaments (nucleation) as well as sever filaments already formed. This is Gelsolin (Gel) from Drosophila melanogaster (Fruit fly).